The chain runs to 127 residues: Aspartate 1-decarboxylase (127 aa).

Catalysis depends on S25, which acts as the Schiff-base intermediate with substrate; via pyruvic acid. S25 is modified (pyruvic acid (Ser)). Substrate is bound at residue T57. Residue Y58 is the Proton donor of the active site. 73–75 provides a ligand contact to substrate; sequence GAA.

This sequence belongs to the PanD family. As to quaternary structure, heterooctamer of four alpha and four beta subunits. Requires pyruvate as cofactor. In terms of processing, is synthesized initially as an inactive proenzyme, which is activated by self-cleavage at a specific serine bond to produce a beta-subunit with a hydroxyl group at its C-terminus and an alpha-subunit with a pyruvoyl group at its N-terminus.

It localises to the cytoplasm. It catalyses the reaction L-aspartate + H(+) = beta-alanine + CO2. It functions in the pathway cofactor biosynthesis; (R)-pantothenate biosynthesis; beta-alanine from L-aspartate: step 1/1. Its function is as follows. Catalyzes the pyruvoyl-dependent decarboxylation of aspartate to produce beta-alanine. This Bacillus subtilis (strain 168) protein is Aspartate 1-decarboxylase.